The sequence spans 38 residues: MKVRASVKKRCEHCKLIKRKGRVMVVCSKNPRHNQRQG.

Belongs to the bacterial ribosomal protein bL36 family.

In Kosmotoga olearia (strain ATCC BAA-1733 / DSM 21960 / TBF 19.5.1), this protein is Large ribosomal subunit protein bL36.